The following is a 263-amino-acid chain: Acetylglutamate kinase (263 aa).

Substrate is bound by residues 49–50 (GG), Arg-71, and Asn-163.

The protein belongs to the acetylglutamate kinase family. ArgB subfamily.

It is found in the cytoplasm. The enzyme catalyses N-acetyl-L-glutamate + ATP = N-acetyl-L-glutamyl 5-phosphate + ADP. The protein operates within amino-acid biosynthesis; L-arginine biosynthesis; N(2)-acetyl-L-ornithine from L-glutamate: step 2/4. Catalyzes the ATP-dependent phosphorylation of N-acetyl-L-glutamate. The chain is Acetylglutamate kinase from Moritella abyssi.